Consider the following 306-residue polypeptide: tRNA dimethylallyltransferase (306 aa).

9 to 16 serves as a coordination point for ATP; it reads GPTGIGKT. 11 to 16 lines the substrate pocket; the sequence is TGIGKT. Residues 34–37 are interaction with substrate tRNA; the sequence is DSMQ.

It belongs to the IPP transferase family. Monomer. Requires Mg(2+) as cofactor.

It carries out the reaction adenosine(37) in tRNA + dimethylallyl diphosphate = N(6)-dimethylallyladenosine(37) in tRNA + diphosphate. Its function is as follows. Catalyzes the transfer of a dimethylallyl group onto the adenine at position 37 in tRNAs that read codons beginning with uridine, leading to the formation of N6-(dimethylallyl)adenosine (i(6)A). This Lactobacillus johnsonii (strain CNCM I-12250 / La1 / NCC 533) protein is tRNA dimethylallyltransferase.